Consider the following 294-residue polypeptide: 4-hydroxy-tetrahydrodipicolinate synthase (294 aa).

Position 45 (Thr-45) interacts with pyruvate. Catalysis depends on Tyr-133, which acts as the Proton donor/acceptor. Lys-161 (schiff-base intermediate with substrate) is an active-site residue. A pyruvate-binding site is contributed by Ile-203.

This sequence belongs to the DapA family. In terms of assembly, homotetramer; dimer of dimers.

It is found in the cytoplasm. The enzyme catalyses L-aspartate 4-semialdehyde + pyruvate = (2S,4S)-4-hydroxy-2,3,4,5-tetrahydrodipicolinate + H2O + H(+). Its pathway is amino-acid biosynthesis; L-lysine biosynthesis via DAP pathway; (S)-tetrahydrodipicolinate from L-aspartate: step 3/4. In terms of biological role, catalyzes the condensation of (S)-aspartate-beta-semialdehyde [(S)-ASA] and pyruvate to 4-hydroxy-tetrahydrodipicolinate (HTPA). The sequence is that of 4-hydroxy-tetrahydrodipicolinate synthase from Shewanella sp. (strain W3-18-1).